We begin with the raw amino-acid sequence, 504 residues long: Maturase K (504 aa).

Belongs to the intron maturase 2 family. MatK subfamily.

The protein resides in the plastid. Its subcellular location is the chloroplast. Usually encoded in the trnK tRNA gene intron. Probably assists in splicing its own and other chloroplast group II introns. The protein is Maturase K of Lupinus argenteus (Silvery lupine).